The primary structure comprises 120 residues: Large ribosomal subunit protein uL24 (120 aa).

The tract at residues 1–26 (MVRVISSQPRKQRKARYNAPHHMRGS) is disordered. Basic residues predominate over residues 10 to 24 (RKQRKARYNAPHHMR).

It belongs to the universal ribosomal protein uL24 family. Part of the 50S ribosomal subunit.

One of two assembly initiator proteins, it binds directly to the 5'-end of the 23S rRNA, where it nucleates assembly of the 50S subunit. Its function is as follows. Located at the polypeptide exit tunnel on the outside of the subunit. The protein is Large ribosomal subunit protein uL24 of Methanospirillum hungatei JF-1 (strain ATCC 27890 / DSM 864 / NBRC 100397 / JF-1).